A 187-amino-acid chain; its full sequence is Large ribosomal subunit protein uL10 (187 aa).

It belongs to the universal ribosomal protein uL10 family. As to quaternary structure, part of the ribosomal stalk of the 50S ribosomal subunit. The N-terminus interacts with L11 and the large rRNA to form the base of the stalk. The C-terminus forms an elongated spine to which L12 dimers bind in a sequential fashion forming a multimeric L10(L12)X complex.

Forms part of the ribosomal stalk, playing a central role in the interaction of the ribosome with GTP-bound translation factors. The protein is Large ribosomal subunit protein uL10 of Synechococcus sp. (strain JA-3-3Ab) (Cyanobacteria bacterium Yellowstone A-Prime).